We begin with the raw amino-acid sequence, 314 residues long: MVVCGETMKLVSLGVMLIGTILSVSSEELVGVWLGLELNLYGFLVIMNPDGHYSPEPCVKYFVVQSTGSILMLVGFVSLMEQHVVSGLVMSTAXTVLKSGVFPLHSWVPSVIKNSSWLASGLMLTWQKVAPLVFLSMILPSKSLWVVIVSMAGIGAVGGLNQNSVRVMSAYSSFVHTSWMLLGLTWSSVVFVGYFAVYSLSVGLFFYGCSLMNKMSMGSQLSSAASGMGLLMLMGMPPFLGFLAKVLVFLMSGSPVIVACIMGSVISLKFYIDFFYSMVMKSLVDKNKVEVKAIWSLVICMNIMGGALILVSFI.

9 helical membrane passes run 13-35 (LGVM…VWLG), 61-80 (YFVV…VSLM), 85-107 (VSGL…LHSW), 117-139 (WLAS…SMIL), 144-166 (LWVV…NSVR), 189-209 (VVFV…FYGC), 224-244 (AASG…GFLA), 246-266 (VLVF…GSVI), and 294-314 (IWSL…VSFI).

The protein belongs to the complex I subunit 2 family.

It localises to the mitochondrion inner membrane. It carries out the reaction a ubiquinone + NADH + 5 H(+)(in) = a ubiquinol + NAD(+) + 4 H(+)(out). Core subunit of the mitochondrial membrane respiratory chain NADH dehydrogenase (Complex I) that is believed to belong to the minimal assembly required for catalysis. Complex I functions in the transfer of electrons from NADH to the respiratory chain. The immediate electron acceptor for the enzyme is believed to be ubiquinone. The sequence is that of NADH-ubiquinone oxidoreductase chain 2 (ND2) from Mytilus edulis (Blue mussel).